The primary structure comprises 202 residues: NADH-quinone oxidoreductase subunit C (202 aa).

It belongs to the complex I 30 kDa subunit family. In terms of assembly, NDH-1 is composed of 14 different subunits. Subunits NuoB, C, D, E, F, and G constitute the peripheral sector of the complex.

The protein localises to the cell inner membrane. It carries out the reaction a quinone + NADH + 5 H(+)(in) = a quinol + NAD(+) + 4 H(+)(out). In terms of biological role, NDH-1 shuttles electrons from NADH, via FMN and iron-sulfur (Fe-S) centers, to quinones in the respiratory chain. The immediate electron acceptor for the enzyme in this species is believed to be ubiquinone. Couples the redox reaction to proton translocation (for every two electrons transferred, four hydrogen ions are translocated across the cytoplasmic membrane), and thus conserves the redox energy in a proton gradient. This is NADH-quinone oxidoreductase subunit C from Hyphomonas neptunium (strain ATCC 15444).